The primary structure comprises 330 residues: D-cysteine desulfhydrase (330 aa).

Lys52 carries the N6-(pyridoxal phosphate)lysine modification.

It belongs to the ACC deaminase/D-cysteine desulfhydrase family. As to quaternary structure, homodimer. It depends on pyridoxal 5'-phosphate as a cofactor.

It catalyses the reaction D-cysteine + H2O = hydrogen sulfide + pyruvate + NH4(+) + H(+). Functionally, catalyzes the alpha,beta-elimination reaction of D-cysteine and of several D-cysteine derivatives. It could be a defense mechanism against D-cysteine. In Yersinia enterocolitica serotype O:8 / biotype 1B (strain NCTC 13174 / 8081), this protein is D-cysteine desulfhydrase.